Here is a 570-residue protein sequence, read N- to C-terminus: Glutamate--tRNA ligase (570 aa).

Residues 107–117 (PNPDFVLHLGS) carry the 'HIGH' region motif.

The protein belongs to the class-I aminoacyl-tRNA synthetase family. Glutamate--tRNA ligase type 2 subfamily.

It localises to the cytoplasm. It catalyses the reaction tRNA(Glu) + L-glutamate + ATP = L-glutamyl-tRNA(Glu) + AMP + diphosphate. Functionally, catalyzes the attachment of glutamate to tRNA(Glu) in a two-step reaction: glutamate is first activated by ATP to form Glu-AMP and then transferred to the acceptor end of tRNA(Glu). This Pyrobaculum calidifontis (strain DSM 21063 / JCM 11548 / VA1) protein is Glutamate--tRNA ligase.